A 99-amino-acid polypeptide reads, in one-letter code: Putative protein YgeP (99 aa).

This is Putative protein YgeP (ygeP) from Escherichia coli (strain K12).